A 397-amino-acid chain; its full sequence is Lysophospholipid transporter LplT (397 aa).

The Periplasmic segment spans residues 1–17 (MSESVHTNTSLWSKGMK). Residues 18–38 (AVIVAQFLSAFGDNALLFATL) traverse the membrane as a helical segment. Topologically, residues 39–52 (ALLKAQFYPEWSQP) are cytoplasmic. A helical transmembrane segment spans residues 53 to 73 (ILQMVFVGAYILFAPFVGQVA). The Periplasmic portion of the chain corresponds to 74–90 (DSFAKGRVMMFANGLKL). A helical membrane pass occupies residues 91 to 111 (LGAASICFGINPFLGYTLVGV). At 112 to 144 (GAAAYSPAKYGILGELTTGSKLVKANGLMEAST) the chain is on the cytoplasmic side. A helical membrane pass occupies residues 145 to 165 (IAAILLGSVAGGVLADWHVLV). Alanine 166 is a topological domain (periplasmic). The helical transmembrane segment at 167-187 (LAACALAYGGAVVANIYIPKL) threads the bilayer. Over 188 to 226 (AAARPGQSWNLINMTRSFLNACTSLWRNGETRFSLVGTS) the chain is Cytoplasmic. Residues 227–247 (LFWGAGVTLRFLLVLWVPVAL) traverse the membrane as a helical segment. Residues 248 to 256 (GITDNATPT) are Periplasmic-facing. Residues 257–277 (YLNAMVAIGIVVGAGAAAKLV) form a helical membrane-spanning segment. Residues 278 to 280 (TLE) lie on the Cytoplasmic side of the membrane. A helical transmembrane segment spans residues 281–301 (TVSRCMPAGILIGVVVLIFSL). Residues 302–304 (QHE) lie on the Periplasmic side of the membrane. The helical transmembrane segment at 305–325 (LLPAYALLMLIGVLGGFFVVP) threads the bilayer. At 326–343 (LNALLQERGKKSVGAGNA) the chain is on the cytoplasmic side. Residues 344 to 364 (IAVQNLGENSAMLLMLGIYSL) traverse the membrane as a helical segment. Residues 365 to 366 (AV) are Periplasmic-facing. A helical transmembrane segment spans residues 367-387 (MVGIPVVPIGIGFGALFALAI). Over 388–397 (TALWIWQRRH) the chain is Cytoplasmic.

This sequence belongs to the major facilitator superfamily. LplT (TC 2.A.1.42) family.

Its subcellular location is the cell inner membrane. Catalyzes the facilitated diffusion of 2-acyl-glycero-3-phosphoethanolamine (2-acyl-GPE) into the cell. This chain is Lysophospholipid transporter LplT, found in Escherichia coli (strain SMS-3-5 / SECEC).